Here is a 397-residue protein sequence, read N- to C-terminus: RNA polymerase II elongation factor ELL3 (397 aa).

2 disordered regions span residues 164-219 (VSDP…KRSV) and 237-284 (VPSP…PEDI). Residues 168–178 (LASNQGQSLPG) show a composition bias toward polar residues. Residues 250–262 (QEGEDWEQEDEDM) are compositionally biased toward acidic residues. Low complexity predominate over residues 269–281 (SSSVQEDSESPSP). One can recognise an OCEL domain in the interval 285–395 (PDYLLQYRAI…LILEFEEKNR (111 aa)).

It belongs to the ELL/occludin family. Interacts with AFF4. Component of the super elongation complex (SEC), at least composed of EAF1, EAF2, CDK9, MLLT3/AF9, AFF (AFF1 or AFF4), the P-TEFb complex and ELL (ELL, ELL2 or ELL3). Component of the little elongation complex (LEC), at least composed of ELL (ELL, ELL2 or ELL3), ZC3H8, ICE1 and ICE2. Testis specific.

The protein localises to the nucleus. Enhancer-binding elongation factor that specifically binds enhancers in embryonic stem cells (ES cells), marks them, and is required for their future activation during stem cell specification. Does not only bind to enhancer regions of active genes, but also marks the enhancers that are in a poised or inactive state in ES cells and is required for establishing proper RNA polymerase II occupancy at developmentally regulated genes in a cohesin-dependent manner. Probably required for priming developmentally regulated genes for later recruitment of the super elongation complex (SEC), for transcriptional activation during differentiation. Required for recruitment of P-TEFb within SEC during differentiation. Probably preloaded on germ cell chromatin, suggesting that it may prime gene activation by marking enhancers as early as in the germ cells. Promoting epithelial-mesenchymal transition (EMT). Elongation factor component of the super elongation complex (SEC), a complex required to increase the catalytic rate of RNA polymerase II transcription by suppressing transient pausing by the polymerase at multiple sites along the DNA. Component of the little elongation complex (LEC), a complex required to regulate small nuclear RNA (snRNA) gene transcription by RNA polymerase II and III. This is RNA polymerase II elongation factor ELL3 (ELL3) from Homo sapiens (Human).